Here is a 131-residue protein sequence, read N- to C-terminus: Small ribosomal subunit protein uS8 (131 aa).

This sequence belongs to the universal ribosomal protein uS8 family. Part of the 30S ribosomal subunit. Contacts proteins S5 and S12.

In terms of biological role, one of the primary rRNA binding proteins, it binds directly to 16S rRNA central domain where it helps coordinate assembly of the platform of the 30S subunit. This is Small ribosomal subunit protein uS8 from Bordetella petrii (strain ATCC BAA-461 / DSM 12804 / CCUG 43448).